A 137-amino-acid chain; its full sequence is Profilin-3 (137 aa).

It belongs to the profilin family. Interacts with ACTRT3.

The protein localises to the cytoplasm. It is found in the cytoskeleton. It localises to the nucleus. Binds to actin and affects the structure of the cytoskeleton. Binds to poly-L-proline, phosphatidylinositol 3-phosphate (PtdIns(3)P), phosphatidylinositol 4,5-bisphosphate (PtdIns(4,5)P2) and phosphatidylinositol 4-phosphate (PtdIns(4)P). Slightly reduces actin polymerization. May be involved in spermatogenesis. The protein is Profilin-3 (PFN3) of Bos taurus (Bovine).